The sequence spans 262 residues: 3-methyl-2-oxobutanoate hydroxymethyltransferase (262 aa).

Residues Asp42 and Asp81 each coordinate Mg(2+). 3-methyl-2-oxobutanoate contacts are provided by residues 42–43 (DS), Asp81, and Lys110. Glu112 contributes to the Mg(2+) binding site. The active-site Proton acceptor is the Glu180.

The protein belongs to the PanB family. As to quaternary structure, homodecamer; pentamer of dimers. Mg(2+) is required as a cofactor.

The protein resides in the cytoplasm. It catalyses the reaction 3-methyl-2-oxobutanoate + (6R)-5,10-methylene-5,6,7,8-tetrahydrofolate + H2O = 2-dehydropantoate + (6S)-5,6,7,8-tetrahydrofolate. It functions in the pathway cofactor biosynthesis; (R)-pantothenate biosynthesis; (R)-pantoate from 3-methyl-2-oxobutanoate: step 1/2. Functionally, catalyzes the reversible reaction in which hydroxymethyl group from 5,10-methylenetetrahydrofolate is transferred onto alpha-ketoisovalerate to form ketopantoate. This Legionella pneumophila (strain Paris) protein is 3-methyl-2-oxobutanoate hydroxymethyltransferase.